A 214-amino-acid chain; its full sequence is S-crystallin 1 (214 aa).

In terms of domain architecture, GST N-terminal spans 2–79 (PSYTLHYFNH…YLAREFGFHG (78 aa)). The GST C-terminal domain occupies 81–214 (NNMEMARVDF…YLQRRCRTDF (134 aa)).

The protein belongs to the GST superfamily. As to expression, lens.

Functionally, S-crystallins are structural components of squids and octopi eye lens. Contains relatively little GST activity (1/1000 of that of mammalian GST enzyme). The polypeptide is S-crystallin 1 (OCTS1) (Octopus vulgaris (Common octopus)).